A 246-amino-acid chain; its full sequence is tRNA pseudouridine synthase A (246 aa).

Aspartate 52 (nucleophile) is an active-site residue. Tyrosine 111 is a binding site for substrate.

Belongs to the tRNA pseudouridine synthase TruA family. Homodimer.

The enzyme catalyses uridine(38/39/40) in tRNA = pseudouridine(38/39/40) in tRNA. Functionally, formation of pseudouridine at positions 38, 39 and 40 in the anticodon stem and loop of transfer RNAs. The protein is tRNA pseudouridine synthase A of Borreliella afzelii (strain PKo) (Borrelia afzelii).